The primary structure comprises 314 residues: Methionyl-tRNA formyltransferase (314 aa).

108–111 (SLLP) lines the (6S)-5,6,7,8-tetrahydrofolate pocket.

It belongs to the Fmt family.

The catalysed reaction is L-methionyl-tRNA(fMet) + (6R)-10-formyltetrahydrofolate = N-formyl-L-methionyl-tRNA(fMet) + (6S)-5,6,7,8-tetrahydrofolate + H(+). Functionally, attaches a formyl group to the free amino group of methionyl-tRNA(fMet). The formyl group appears to play a dual role in the initiator identity of N-formylmethionyl-tRNA by promoting its recognition by IF2 and preventing the misappropriation of this tRNA by the elongation apparatus. The polypeptide is Methionyl-tRNA formyltransferase (Akkermansia muciniphila (strain ATCC BAA-835 / DSM 22959 / JCM 33894 / BCRC 81048 / CCUG 64013 / CIP 107961 / Muc)).